The sequence spans 600 residues: tRNA uridine 5-carboxymethylaminomethyl modification enzyme MnmG (600 aa).

FAD is bound at residue 10–15; that stretch reads GGGHAG. Residues 216–239 are disordered; sequence ADPQPRGFTGTPGPRAAESPTWQT. 267 to 281 is a binding site for NAD(+); that stretch reads GPRYCPSIEDKVVKF.

It belongs to the MnmG family. As to quaternary structure, homodimer. Heterotetramer of two MnmE and two MnmG subunits. Requires FAD as cofactor.

It localises to the cytoplasm. Its function is as follows. NAD-binding protein involved in the addition of a carboxymethylaminomethyl (cmnm) group at the wobble position (U34) of certain tRNAs, forming tRNA-cmnm(5)s(2)U34. This Deinococcus radiodurans (strain ATCC 13939 / DSM 20539 / JCM 16871 / CCUG 27074 / LMG 4051 / NBRC 15346 / NCIMB 9279 / VKM B-1422 / R1) protein is tRNA uridine 5-carboxymethylaminomethyl modification enzyme MnmG.